We begin with the raw amino-acid sequence, 310 residues long: MPISEKSSATNTRLVVKKLFARQLHEGFGAVVRRSIGRFEFRYFDPFLVLDEFSVSAPAGFPDHPHRGFETVTYMLEGEILHEDCEGHKGVIREGGLQWMTAGKGIVHSEMPSSNSNGITHNKGLQLWINLSSRQKLVEPSYQEIESKDIAETEKDGVRVRVIAGEWNGVKSKICTRTPTMYLDFTLSPGSRISQPIPLHWNAFVYVLQGHGHFGDSKLQHSAAAAHHLLVLGLGGDMLEAWNGSDSGLPLRFILVAGEPIGEPMVQFGPFVMNTQEEIDETIDDFENFRNGFEKARHWKSQAASALGLF.

This sequence belongs to the pirin family.

The protein resides in the nucleus. The protein is Pirin-like protein At1g50590 of Arabidopsis thaliana (Mouse-ear cress).